Consider the following 711-residue polypeptide: Transferrin-binding protein B (711 aa).

The N-terminal stretch at Met1–Ala20 is a signal peptide. Cys21 is lipidated: N-palmitoyl cysteine. Cys21 carries the S-diacylglycerol cysteine lipid modification. Disordered regions lie at residues Val33–Gln58, Ser79–Lys105, Asp118–Ala146, Ser225–Leu251, Leu370–Ser396, Pro437–Asn492, and Thr682–Gln711. Over residues Asp46 to Lys56 the composition is skewed to polar residues. The segment covering Lys96–Lys105 has biased composition (basic and acidic residues). A compositionally biased stretch (polar residues) spans Ile119–Ala146. The segment covering Gly373–Ser393 has biased composition (low complexity). The segment covering Phe457 to Ala472 has biased composition (basic and acidic residues). Polar residues-rich tracts occupy residues Ala474–Asn492 and Lys684–Thr699.

It belongs to the TbpB family. Isotype II subfamily. Binds only human holo-transferrin (TF), via the TF C-terminus. Forms a large complex with TbpA and TF. Interacts via its C-terminal domain with Slam1.

The protein localises to the cell outer membrane. It is found in the cell surface. Its function is as follows. Neisseria acquires iron by extracting it from serum transferrin (TF) in its human host. Acts as a TF receptor and is required for TF utilization. Involved in the initial capture of TF. Helps select only those TF molecules that can be used as an iron source and concentrates them on the cell surface, maintaining the iron-loaded status of the TF C-terminal lobe until its delivery to TbpA. In Neisseria meningitidis serogroup B, this protein is Transferrin-binding protein B (tbpB).